The primary structure comprises 301 residues: Protease HtpX (301 aa).

2 consecutive transmembrane segments (helical) span residues 4 to 24 (IGLF…ILSL) and 38 to 58 (LGNL…VSLF). His147 contributes to the Zn(2+) binding site. Glu148 is an active-site residue. His151 is a binding site for Zn(2+). A run of 2 helical transmembrane segments spans residues 155–175 (GDMV…MFFA) and 200–220 (FIIT…IVMW). Glu226 contacts Zn(2+).

This sequence belongs to the peptidase M48B family. Requires Zn(2+) as cofactor.

The protein localises to the cell inner membrane. The polypeptide is Protease HtpX (Acinetobacter baumannii (strain AB307-0294)).